Consider the following 654-residue polypeptide: MTQRSLKINIIEGKDLKGLDSGGVSDCYVKFKCGPISAKTEVIKKSTSPIWNYMINIGNVEENTLLQFECFDWERIGNNRTMGKTQAFVSDLSSGAKRNLMDQWLRLDTKGFIRISYEFTPPYPLETESTNSPNLSVVGNGSSSSSSLMYNPTPVYFKPIFLPTIPSETINNNKSTTCHFLIPGSVYQTRPFVCGEFVNCSLVLNVFEARIVVRSLNLSFSGSITYKGKKQRKLVNDYRDLLLGFTGGVPVPNNNGNNNLTSNKVVLERGKHVFPFQFFIDKTCKSTVNLTDYKVNYYLSFHADIVNQPDISASQEIKVVNLEDTVYKQTISPINAQTSKSPLTGGNISISCKSVKNSFYPGEEIELEVEVNNSSKKKIKNVDIQLNKVEYDGTDVTGTSYQLLTMTKKFYPKIKQNTACKQMVVIELPSTTQCVGLIHSIAETKMIRVEYHLLVNLDIPSCVDLRLKLPITIVQPDPKFETLPNPLTEIGNLPRYVKDWSIKNFHSWVLFKKQCPDVMALNPEFYQYNLSGSDLMQLPTETLYSIFKGAGPRTQELVNDLQSQIFEIKLVRNFLKELQLSNLIDYFEKQTITWDILLQLNYNEIFSITDITIGDAKRIFLKIQQIQSERQKQQEQQEQQVVSNLEAVSLQKSE.

Positions 1–105 constitute a C2 domain; the sequence is MTQRSLKINI…AKRNLMDQWL (105 aa). A coiled-coil region spans residues 616-647; sequence AKRIFLKIQQIQSERQKQQEQQEQQVVSNLEA.

The protein belongs to the arrestin family.

This is Arrestin domain-containing protein C (adcC) from Dictyostelium discoideum (Social amoeba).